The following is a 476-amino-acid chain: tRNA(Ile)-lysidine synthase (476 aa).

Residue 30–35 participates in ATP binding; sequence SGGPDS.

This sequence belongs to the tRNA(Ile)-lysidine synthase family.

Its subcellular location is the cytoplasm. It catalyses the reaction cytidine(34) in tRNA(Ile2) + L-lysine + ATP = lysidine(34) in tRNA(Ile2) + AMP + diphosphate + H(+). Functionally, ligates lysine onto the cytidine present at position 34 of the AUA codon-specific tRNA(Ile) that contains the anticodon CAU, in an ATP-dependent manner. Cytidine is converted to lysidine, thus changing the amino acid specificity of the tRNA from methionine to isoleucine. The sequence is that of tRNA(Ile)-lysidine synthase from Bacillus cereus (strain ZK / E33L).